Here is a 518-residue protein sequence, read N- to C-terminus: Cytochrome P450 704C1 (518 aa).

2 consecutive transmembrane segments (helical) span residues 5-25 and 299-319; these read ILTMFVTVSALALACSLWIAS and VILNFMVAARDTTAIALSWFI. Cysteine 461 contributes to the heme binding site.

Belongs to the cytochrome P450 family. Requires heme as cofactor.

It is found in the membrane. The protein is Cytochrome P450 704C1 (CYP704C1) of Pinus taeda (Loblolly pine).